Consider the following 104-residue polypeptide: Sweet protein mabinlin-3 (104 aa).

4 cysteine pairs are disulfide-bonded: Cys4/Cys53, Cys17/Cys42, Cys43/Cys91, and Cys55/Cys99.

Belongs to the 2S seed storage albumins family. Heterodimer of a small A and a large B chain linked by disulfide bonds.

Functionally, heat stable 2S seed storage protein having sweetness-inducing activity. This chain is Sweet protein mabinlin-3, found in Capparis masaikai (Mabinlang).